The primary structure comprises 448 residues: C4-dicarboxylate transport protein (448 aa).

8 consecutive transmembrane segments (helical) span residues 20 to 38, 53 to 75, 88 to 110, 161 to 178, 199 to 220, 230 to 252, 325 to 347, and 362 to 384; these read LYFQ…GHFY, IRLV…IAGM, AMIY…ANTV, ILQV…LGIV, LVAI…FTIG, LAML…LGAV, LFIA…LLVA, and FITL…ALIL.

The protein belongs to the dicarboxylate/amino acid:cation symporter (DAACS) (TC 2.A.23) family.

The protein resides in the cell inner membrane. Responsible for the transport of dicarboxylates such as succinate, fumarate, and malate from the periplasm across the membrane. This is C4-dicarboxylate transport protein from Agrobacterium fabrum (strain C58 / ATCC 33970) (Agrobacterium tumefaciens (strain C58)).